We begin with the raw amino-acid sequence, 564 residues long: Ribulokinase (564 aa).

Belongs to the ribulokinase family.

The enzyme catalyses D-ribulose + ATP = D-ribulose 5-phosphate + ADP + H(+). It carries out the reaction L-ribulose + ATP = L-ribulose 5-phosphate + ADP + H(+). It participates in carbohydrate degradation; L-arabinose degradation via L-ribulose; D-xylulose 5-phosphate from L-arabinose (bacterial route): step 2/3. In Anoxybacillus flavithermus (strain DSM 21510 / WK1), this protein is Ribulokinase.